The primary structure comprises 128 residues: Small ribosomal subunit protein uS11 (128 aa).

It belongs to the universal ribosomal protein uS11 family. In terms of assembly, part of the 30S ribosomal subunit. Interacts with proteins S7 and S18. Binds to IF-3.

Its function is as follows. Located on the platform of the 30S subunit, it bridges several disparate RNA helices of the 16S rRNA. Forms part of the Shine-Dalgarno cleft in the 70S ribosome. The protein is Small ribosomal subunit protein uS11 of Leuconostoc mesenteroides subsp. mesenteroides (strain ATCC 8293 / DSM 20343 / BCRC 11652 / CCM 1803 / JCM 6124 / NCDO 523 / NBRC 100496 / NCIMB 8023 / NCTC 12954 / NRRL B-1118 / 37Y).